The chain runs to 184 residues: Glutathione-regulated potassium-efflux system ancillary protein KefG (184 aa).

It belongs to the NAD(P)H dehydrogenase (quinone) family. KefG subfamily. In terms of assembly, interacts with KefB.

It is found in the cell inner membrane. The enzyme catalyses a quinone + NADH + H(+) = a quinol + NAD(+). It carries out the reaction a quinone + NADPH + H(+) = a quinol + NADP(+). In terms of biological role, regulatory subunit of a potassium efflux system that confers protection against electrophiles. Required for full activity of KefB. The polypeptide is Glutathione-regulated potassium-efflux system ancillary protein KefG (Erwinia tasmaniensis (strain DSM 17950 / CFBP 7177 / CIP 109463 / NCPPB 4357 / Et1/99)).